The following is a 120-amino-acid chain: Small ribosomal subunit protein bS6 (120 aa).

The tract at residues 93 to 120 (KKADTAPSSMMKTVEREEARKASQTEQA) is disordered. The segment covering 105-120 (TVEREEARKASQTEQA) has biased composition (basic and acidic residues).

This sequence belongs to the bacterial ribosomal protein bS6 family.

In terms of biological role, binds together with bS18 to 16S ribosomal RNA. This is Small ribosomal subunit protein bS6 from Delftia acidovorans (strain DSM 14801 / SPH-1).